A 232-amino-acid chain; its full sequence is Large ribosomal subunit protein uL1 (232 aa).

Belongs to the universal ribosomal protein uL1 family. In terms of assembly, part of the 50S ribosomal subunit.

In terms of biological role, binds directly to 23S rRNA. The L1 stalk is quite mobile in the ribosome, and is involved in E site tRNA release. Protein L1 is also a translational repressor protein, it controls the translation of the L11 operon by binding to its mRNA. In Xanthomonas campestris pv. campestris (strain B100), this protein is Large ribosomal subunit protein uL1.